The following is a 354-amino-acid chain: G protein alpha o subunit (354 aa).

A lipid anchor (N-myristoyl glycine) is attached at glycine 2. Residue cysteine 3 is the site of S-palmitoyl cysteine attachment. Residues 32 to 354 (KDIKLLLLGA…ANNLRGCGLY (323 aa)) form the G-alpha domain. Positions 35–48 (KLLLLGAGESGKST) are G1 motif. GTP contacts are provided by residues 40 to 47 (GAGESGKS), 176 to 182 (LRTRVKT), 201 to 205 (DVGGQ), 270 to 273 (NKKD), and alanine 326. Mg(2+) contacts are provided by serine 47 and threonine 182. The interval 174 to 182 (DILRTRVKT) is G2 motif. Residues 197–206 (FKLFDVGGQR) are G3 motif. Residues 266–273 (ILFLNKKD) form a G4 motif region. The G5 motif stretch occupies residues 324-329 (TCATDT).

Belongs to the G-alpha family. G(i/o/t/z) subfamily. G proteins are composed of 3 units; alpha, beta and gamma. The alpha chain contains the guanine nucleotide binding site. Expressed primarily in neuronal cell bodies in the brain, optic lobe, and thoracic and abdominal ganglia. Also expressed in antenna, oocytes and ovarian nurse cells.

In terms of biological role, guanine nucleotide-binding proteins (G proteins) are involved as modulators or transducers in various transmembrane signaling systems. Plays a role in glial cell differentiation during embryogenesis; loco, Galphai and the G-protein coupled receptor, moody, are required in the surface glia to achieve effective insulation of the nerve cord. The protein is G protein alpha o subunit (Galphao) of Drosophila melanogaster (Fruit fly).